A 654-amino-acid chain; its full sequence is Coiled-coil domain-containing protein 30 (654 aa).

The tract at residues 38–65 is disordered; it reads TLESRRDPNSSLQKEFPQHQDEDQSRAA. Basic and acidic residues predominate over residues 53–62; the sequence is FPQHQDEDQS. Coiled-coil stretches lie at residues 97–244 and 276–559; these read REER…LDNA and KSQQ…QIIR. The segment at 614 to 654 is disordered; that stretch reads AAAIPKSPEPLSRSQDSESGYINVTSLKETHNTQGDQKPEL. Over residues 625-654 the composition is skewed to polar residues; the sequence is SRSQDSESGYINVTSLKETHNTQGDQKPEL.

It belongs to the prefoldin subunit beta family.

The sequence is that of Coiled-coil domain-containing protein 30 (Ccdc30) from Mus musculus (Mouse).